A 123-amino-acid polypeptide reads, in one-letter code: MTTLANLTQTLEDAFKKVFITYMDSWRRNTTAEQQALQARVDAENFYYVILYLMVMIGMFAFIVVAILVSTVKSKRREHSQDPYHQYIVEDWQQKYRSQILHLEDSKATIHENLGATGFTVSP.

Asn-6 and Asn-29 each carry an N-linked (GlcNAc...) asparagine glycan. A helical membrane pass occupies residues 49 to 69; it reads VILYLMVMIGMFAFIVVAILV. Topologically, residues 70–123 are cytoplasmic; that stretch reads STVKSKRREHSQDPYHQYIVEDWQQKYRSQILHLEDSKATIHENLGATGFTVSP.

This sequence belongs to the potassium channel KCNE family. Interacts with KCNB1. Associates with KCNH2/ERG1. May associate with KCNQ2 and KCNQ3. Associates with HCN1 and probably HCN2. Heteromultimer with KCNC2. Interacts with KCNC2. Interacts with KCNQ1; forms a heterooligomer complex that targets to the membrane raft and leading to currents with an apparently instantaneous activation, a rapid deactivation process and a linear current-voltage relationship and decreases the amplitude of the outward current.

The protein localises to the cell membrane. Its subcellular location is the apical cell membrane. Functionally, ancillary protein that functions as a regulatory subunit of the voltage-gated potassium (Kv) channel complex composed of pore-forming and potassium-conducting alpha subunits and of regulatory beta subunits. KCNE2 beta subunit modulates the gating kinetics and enhances stability of the channel complex. Alters the gating of the delayed rectifier Kv channel containing KCNB1 alpha subunit. Associates with KCNH2/HERG alpha subunit Kv channel to form the rapidly activating component of the delayed rectifying potassium current (IKr) in heart. May associate with KCNQ2 and/or KCNQ3 alpha subunits to modulate the native M-type current. May associate with HCN1 and HCN2 channel subunits to increase potassium current. Forms a heterooligomer complex with KCNQ1/KVLQT1 alpha subunits which leads to currents with an apparently instantaneous activation, a rapid deactivation process and a linear current-voltage relationship and decreases the amplitude of the outward current. KCNQ1-KCNE2 channel associates with Na(+)-coupled myo-inositol symporter in the apical membrane of choroid plexus epithelium and regulates the myo-inositol gradient between blood and cerebrospinal fluid with an impact on neuron excitability. In Cavia porcellus (Guinea pig), this protein is Potassium voltage-gated channel subfamily E member 2 (Kcne2).